A 440-amino-acid polypeptide reads, in one-letter code: Chromosomal replication initiator protein DnaA (440 aa).

The tract at residues Met-1–Ile-75 is domain I, interacts with DnaA modulators. The tract at residues Ile-75 to Thr-99 is domain II. Residues Ile-100–Ala-316 are domain III, AAA+ region. Positions 146, 148, 149, and 150 each coordinate ATP. The segment at Thr-317–Ser-440 is domain IV, binds dsDNA.

It belongs to the DnaA family. Oligomerizes as a right-handed, spiral filament on DNA at oriC.

It is found in the cytoplasm. Plays an essential role in the initiation and regulation of chromosomal replication. ATP-DnaA binds to the origin of replication (oriC) to initiate formation of the DNA replication initiation complex once per cell cycle. Binds the DnaA box (a 9 base pair repeat at the origin) and separates the double-stranded (ds)DNA. Forms a right-handed helical filament on oriC DNA; dsDNA binds to the exterior of the filament while single-stranded (ss)DNA is stabiized in the filament's interior. The ATP-DnaA-oriC complex binds and stabilizes one strand of the AT-rich DNA unwinding element (DUE), permitting loading of DNA polymerase. After initiation quickly degrades to an ADP-DnaA complex that is not apt for DNA replication. Binds acidic phospholipids. This chain is Chromosomal replication initiator protein DnaA, found in Campylobacter jejuni subsp. jejuni serotype O:6 (strain 81116 / NCTC 11828).